Consider the following 188-residue polypeptide: MKLIVGLGNPGNEYRFTRHNAGFLAIDKICEKLNISLNKEKFNGEFAVSDGFILAKPLTYMNKSGDFVYSIASFYKINPSDIIVIYDDLSFSIGQAAIKIGGSSAGHKGIERLMSKFSSNDFKRIRVGIGVNSGTTIKDYVLSLFTKDEMIVVEEVLEKVADAAISLVYNDVNFVMNKFNTDNKKRVI.

Tyr14 is a binding site for tRNA. Catalysis depends on His19, which acts as the Proton acceptor. Positions 60 and 62 each coordinate tRNA.

This sequence belongs to the PTH family. In terms of assembly, monomer.

Its subcellular location is the cytoplasm. The catalysed reaction is an N-acyl-L-alpha-aminoacyl-tRNA + H2O = an N-acyl-L-amino acid + a tRNA + H(+). Hydrolyzes ribosome-free peptidyl-tRNAs (with 1 or more amino acids incorporated), which drop off the ribosome during protein synthesis, or as a result of ribosome stalling. In terms of biological role, catalyzes the release of premature peptidyl moieties from peptidyl-tRNA molecules trapped in stalled 50S ribosomal subunits, and thus maintains levels of free tRNAs and 50S ribosomes. This chain is Peptidyl-tRNA hydrolase, found in Mycoplasmopsis agalactiae (strain NCTC 10123 / CIP 59.7 / PG2) (Mycoplasma agalactiae).